Reading from the N-terminus, the 309-residue chain is Protein FdhE (309 aa).

The protein belongs to the FdhE family.

The protein resides in the cytoplasm. Its function is as follows. Necessary for formate dehydrogenase activity. The sequence is that of Protein FdhE from Salmonella typhimurium (strain LT2 / SGSC1412 / ATCC 700720).